The chain runs to 384 residues: dTDP-dihydrostreptose--streptidine-6-phosphate dihydrostreptosyltransferase (384 aa).

It carries out the reaction dTDP-L-dihydrostreptose + streptidine 6-phosphate = O-(1-&gt;4)-alpha-L-dihydrostreptosyl-streptidine 6-phosphate + dTDP + H(+). The protein operates within antibiotic biosynthesis; streptomycin biosynthesis. In terms of biological role, is probably a dihydrostreptosyl glycosyltransferase, involved in the first glycosylation step condensing streptidine-6-phosphate and dihydrostreptose. This is dTDP-dihydrostreptose--streptidine-6-phosphate dihydrostreptosyltransferase (strH) from Streptomyces griseus.